A 498-amino-acid polypeptide reads, in one-letter code: Lysine--tRNA ligase (498 aa).

Glu407 and Glu414 together coordinate Mg(2+).

Belongs to the class-II aminoacyl-tRNA synthetase family. Homodimer. The cofactor is Mg(2+).

The protein localises to the cytoplasm. The enzyme catalyses tRNA(Lys) + L-lysine + ATP = L-lysyl-tRNA(Lys) + AMP + diphosphate. This is Lysine--tRNA ligase from Sinorhizobium medicae (strain WSM419) (Ensifer medicae).